A 90-amino-acid chain; its full sequence is Small ribosomal subunit protein uS15 (90 aa).

It belongs to the universal ribosomal protein uS15 family. Part of the 30S ribosomal subunit. Forms a bridge to the 50S subunit in the 70S ribosome, contacting the 23S rRNA.

Functionally, one of the primary rRNA binding proteins, it binds directly to 16S rRNA where it helps nucleate assembly of the platform of the 30S subunit by binding and bridging several RNA helices of the 16S rRNA. Its function is as follows. Forms an intersubunit bridge (bridge B4) with the 23S rRNA of the 50S subunit in the ribosome. The sequence is that of Small ribosomal subunit protein uS15 from Helicobacter acinonychis (strain Sheeba).